The sequence spans 627 residues: MACPF domain-containing protein At1g14780 (627 aa).

Residues 1-339 (MSRDGGDVIE…PPLMDLQYFL (339 aa)) form the MACPF domain.

Belongs to the complement C6/C7/C8/C9 (TC 1.C.39) family.

In terms of biological role, negatively controls the salicylic acid (SA)-mediated pathway of programmed cell death in plant immunity. This chain is MACPF domain-containing protein At1g14780, found in Arabidopsis thaliana (Mouse-ear cress).